Consider the following 651-residue polypeptide: Protein RcaC (651 aa).

Positions 2 to 116 constitute a Response regulatory 1 domain; that stretch reads KILLVEDDDV…ELIARIRALL (115 aa). 4-aspartylphosphate is present on aspartate 51. Residues 124-223 constitute a DNA-binding region (ompR/PhoB-type); sequence FPLLTWGDLL…MHGRGYYLKA (100 aa). Response regulatory domains are found at residues 384-519 and 527-643; these read LLLM…VNLL and KVMI…LRRL.

Its function is as follows. Required for chromatic adaptation. Thought to be a positive regulator of phycobiliproteins. The polypeptide is Protein RcaC (rcaC) (Microchaete diplosiphon (Fremyella diplosiphon)).